Here is a 215-residue protein sequence, read N- to C-terminus: Nucleoside triphosphate pyrophosphatase (215 aa).

Asp-77 acts as the Proton acceptor in catalysis.

The protein belongs to the Maf family. A divalent metal cation is required as a cofactor.

The protein localises to the cytoplasm. The enzyme catalyses a ribonucleoside 5'-triphosphate + H2O = a ribonucleoside 5'-phosphate + diphosphate + H(+). It catalyses the reaction a 2'-deoxyribonucleoside 5'-triphosphate + H2O = a 2'-deoxyribonucleoside 5'-phosphate + diphosphate + H(+). Functionally, nucleoside triphosphate pyrophosphatase. May have a dual role in cell division arrest and in preventing the incorporation of modified nucleotides into cellular nucleic acids. The protein is Nucleoside triphosphate pyrophosphatase of Rickettsia africae (strain ESF-5).